Reading from the N-terminus, the 462-residue chain is Gastric inhibitory polypeptide receptor (462 aa).

Residues Met1–Gln18 form the signal peptide. Topologically, residues Gln19–Gln135 are extracellular. Cystine bridges form between Cys43/Cys67, Cys58/Cys100, and Cys81/Cys115. N-linked (GlcNAc...) asparagine glycosylation is found at Asn59 and Asn74. Residues Val136–Leu158 traverse the membrane as a helical segment. Residues Phe159–Arg166 lie on the Cytoplasmic side of the membrane. A helical transmembrane segment spans residues Asn167–Thr186. Residues Arg187–Arg214 are Extracellular-facing. A helical transmembrane segment spans residues Thr215–His239. Residues His240 to Gly251 lie on the Cytoplasmic side of the membrane. The chain crosses the membrane as a helical span at residues His252–Arg275. Residues Tyr276–Lys290 lie on the Extracellular side of the membrane. Residues Ala291–Gly316 traverse the membrane as a helical segment. Topologically, residues Ile317 to Arg338 are cytoplasmic. Residues Ser339–Glu359 form a helical membrane-spanning segment. Residues Glu360–Glu374 lie on the Extracellular side of the membrane. Residues Ile375–Glu395 traverse the membrane as a helical segment. The Cytoplasmic segment spans residues Val396 to Cys462. The tract at residues His421–Cys462 is disordered.

Belongs to the G-protein coupled receptor 2 family. May form homodimers and heterodimers with GLP1R. N-glycosylation is required for cell surface expression and lengthens receptor half-life by preventing degradation in the ER. In terms of tissue distribution, widely distributed including pancreatic islets, brain and various peripheral tissues.

The protein localises to the cell membrane. Its function is as follows. This is a receptor for GIP. The activity of this receptor is mediated by G proteins which activate adenylyl cyclase. The polypeptide is Gastric inhibitory polypeptide receptor (GIPR) (Mesocricetus auratus (Golden hamster)).